The sequence spans 701 residues: Polyribonucleotide nucleotidyltransferase (701 aa).

The Mg(2+) site is built by Asp-487 and Asp-493. In terms of domain architecture, KH spans 554-613 (PTMIAMKIDTDKIRDVIGKGGATIRAICEETKASIDIEDDGSIKIFGETKEAADAAKQRI). An S1 motif domain is found at 623–691 (GKIYVGKVER…NRGRIKLSIK (69 aa)).

The protein belongs to the polyribonucleotide nucleotidyltransferase family. Component of the RNA degradosome, which is a multiprotein complex involved in RNA processing and mRNA degradation. The cofactor is Mg(2+).

It is found in the cytoplasm. It catalyses the reaction RNA(n+1) + phosphate = RNA(n) + a ribonucleoside 5'-diphosphate. Involved in mRNA degradation. Catalyzes the phosphorolysis of single-stranded polyribonucleotides processively in the 3'- to 5'-direction. This chain is Polyribonucleotide nucleotidyltransferase, found in Pseudomonas putida (Arthrobacter siderocapsulatus).